The primary structure comprises 430 residues: Probable folylpolyglutamate synthase (430 aa).

37-40 (GKET) contacts ATP. Mg(2+) is bound at residue E132. Position 300 (D300) interacts with ATP.

The protein belongs to the folylpolyglutamate synthase family.

It is found in the mitochondrion. It catalyses the reaction (6S)-5,6,7,8-tetrahydrofolyl-(gamma-L-Glu)(n) + L-glutamate + ATP = (6S)-5,6,7,8-tetrahydrofolyl-(gamma-L-Glu)(n+1) + ADP + phosphate + H(+). It participates in cofactor biosynthesis; tetrahydrofolylpolyglutamate biosynthesis. In terms of biological role, conversion of folates to polyglutamate derivatives. This Saccharomyces cerevisiae (strain ATCC 204508 / S288c) (Baker's yeast) protein is Probable folylpolyglutamate synthase (RMA1).